A 430-amino-acid chain; its full sequence is Adenylosuccinate synthetase (430 aa).

Residues 11–17 (GDEGKGK) and 39–41 (GHS) each bind GTP. D12 acts as the Proton acceptor in catalysis. Mg(2+) is bound by residues D12 and G39. IMP is bound by residues 12–15 (DEGK), 37–40 (NAGH), T129, R143, N221, T236, and R300. The active-site Proton donor is H40. Residue 296 to 302 (VSTGRKR) coordinates substrate. Residues R302, 328-330 (KLD), and 412-414 (GTG) each bind GTP.

It belongs to the adenylosuccinate synthetase family. As to quaternary structure, homodimer. The cofactor is Mg(2+).

Its subcellular location is the cytoplasm. The enzyme catalyses IMP + L-aspartate + GTP = N(6)-(1,2-dicarboxyethyl)-AMP + GDP + phosphate + 2 H(+). It participates in purine metabolism; AMP biosynthesis via de novo pathway; AMP from IMP: step 1/2. Its function is as follows. Plays an important role in the de novo pathway and in the salvage pathway of purine nucleotide biosynthesis. Catalyzes the first committed step in the biosynthesis of AMP from IMP. The chain is Adenylosuccinate synthetase from Sordaria macrospora (strain ATCC MYA-333 / DSM 997 / K(L3346) / K-hell).